The sequence spans 244 residues: tRNA pseudouridine synthase A (244 aa).

Asp52 functions as the Nucleophile in the catalytic mechanism. A substrate-binding site is contributed by Tyr110.

It belongs to the tRNA pseudouridine synthase TruA family. As to quaternary structure, homodimer.

The enzyme catalyses uridine(38/39/40) in tRNA = pseudouridine(38/39/40) in tRNA. Its function is as follows. Formation of pseudouridine at positions 38, 39 and 40 in the anticodon stem and loop of transfer RNAs. The polypeptide is tRNA pseudouridine synthase A (Clostridium botulinum (strain Alaska E43 / Type E3)).